The following is a 439-amino-acid chain: MDGKPATRKGPDFCSLRYGLALIMHFSNFTMITQRVSLSIAIIAMVNTTQQQGLSNASTEGPVADAFNNSSISIKEFDTKASVYQWSPETQGIIFSSINYGIILTLIPSGYLAGIFGAKKMLGAGLLISSLLTLFTPLAADFGVILVIMVRTVQGMAQGMAWTGQFTIWAKWAPPLERSKLTTIAGSGSAFGSFIILCVGGLISQALSWPFIFYIFGSTGCVCCLLWFTVIYDDPMHHPCISVREKEHILSSLAQQPSSPGRAVPIKAMVTCLPLWAIFLGFFSHFWLCTIILTYLPTYISTLLHVNIRDSGVLSSLPFIAAASCTILGGQLADFLLSRNLLRLITVRKLFSSLGLLLPSICAVALPFVASSYVITIILLILIPGTSNLCDSGFIINTLDIAPRYASFLMGISRGFGLIAGIISSTATGFLISQVGPVY.

N-linked (GlcNAc...) asparagine glycans are attached at residues N47, N56, N68, and N69. Transmembrane regions (helical) follow at residues 98-118 (INYGIILTLIPSGYLAGIFGA), 130-150 (SLLTLFTPLAADFGVILVIMV), 183-203 (TIAGSGSAFGSFIILCVGGLI), 211-231 (FIFYIFGSTGCVCCLLWFTVI), 273-293 (LPLWAIFLGFFSHFWLCTIIL), 317-337 (LPFIAAASCTILGGQLADFLL), 350-369 (LFSSLGLLLPSICAVALPFV), 374-396 (VITIILLILIPGTSNLCDSGFII), and 415-435 (GFGLIAGIISSTATGFLISQV).

The protein belongs to the major facilitator superfamily. Sodium/anion cotransporter family. Expressed in the small intestine, kidney, spleen and testis. Not detected in fetal brain, bone marrow, and mammary gland.

Its subcellular location is the apical cell membrane. The enzyme catalyses 3 Na(+)(out) + phosphate(out) = 3 Na(+)(in) + phosphate(in). It catalyses the reaction urate(out) + n chloride(in) = urate(in) + n chloride(out). Functionally, acts as a membrane potential-dependent organic anion transporter, the transport requires a low concentration of chloride ions. Mediates chloride-dependent transport of urate. Can actively transport inorganic phosphate into cells via Na(+) cotransport. This is Sodium-dependent phosphate transport protein 3 (SLC17A2) from Homo sapiens (Human).